Consider the following 1189-residue polypeptide: MTDSEHAGHDREDGELEDGEIDDAGFEEIQEKEAKENEKQKSEKAYRKSRKKHKKEREKKKSKRRKREKHKHNSPSSDDSSDYSLDSDVEHTESSHKKRTGFYRDYDIPFTQRGHISGSYITSKKGQHNKKFKSKEYDEYSTYSDDNFGNYSDDNFGNYGQETEEDFANQLKQYRQAKETSNIALGSSFSKESGKKQRMKGVQQGIEQRVKSFNVGRGRGLPKKIKRKERGGRTNKGPNVFSVSDDFQEYNKPGKKWKVMTQEFINQHTVEHKGKQICKYFLEGRCIKGDQCKFDHDAELEKRKEICKFYLQGYCTKGENCIYMHNEFPCKFYHSGAKCYQGDNCKFSHDDLTKETKKLLDKVLNTDEELINEDERELEELRKRGITPLPKPPPGVGLLPTPPEHFPFSDPEDDFQTDFSDDFRKIPSLFEIVVKPTVDLAHKIGRKPPAFYTSASPPGPQFQGSSPHPQHIYSSGSSPGPGPNMSQGHSSPVMHPGSPGHHPCAGPPGLPVPQSPPLPPGPPEIVGPQNQAGVLVQPDTSLTPPSMGGAYHSPGFPGHVMKVPRENHCSPGSSYQQSPGEMQLNTNYESLQNPAEFYDNYYAQHSIHNFQPPNNSGDGMWHGEFAQQQPPVVQDSPNHGSGSDGSSTRTGHGPLPVPGLLPAVQRALFVRLTQRYQEDEEQTSTQPHRAPSKEEDDTVNWYSSSEEEEGSSVKSILKTLQKQTETLRNQQQPSTELSTPTDPRLAKEKSKGNQVVDPRLRTIPRQDIRKPSESAPLDLRLAWDPRKLRGNGSGHIGSSVGGAKFDLHHANAGTNVKHKRGDDDDEDTERELREKAFLIPLDASPGIMLQDPRSQLRQFSHIKMDITLTKPNFAKHIVWAPEDLLPVPLPKPDPVSSINLPLPPLIADQRLNRLWNTKSDLHQNTVSIDPKLAAKAKINTTNREGYLEQFGDSHGSGAKLGDPRLQKNFDPRLHRLPNTESHQVVMKDSHASKGAPHLPRSNPGSSQPSGAGTSNSGSGALPPYAPKLSSSAGLPLGTSTSVLSGISLYDPRDHGSSSTSELATASSGENSKNQKKSGGLKSSDKTEPSPGEAILPQKPSPNVGVTLEGPADPQADVPRSSGKVQVPAVHSLPVQALTGLIRPQYSDPRQARQPGQGSPTPDNDPGRETDDKSLKEVFKTFDPTASPFC.

A compositionally biased stretch (basic and acidic residues) spans 1-12 (MTDSEHAGHDRE). The tract at residues 1 to 105 (MTDSEHAGHD…HKKRTGFYRD (105 aa)) is disordered. Acidic residues predominate over residues 13 to 28 (DGELEDGEIDDAGFEE). Residues 27 to 73 (EEIQEKEAKENEKQKSEKAYRKSRKKHKKEREKKKSKRRKREKHKHN) adopt a coiled-coil conformation. A compositionally biased stretch (basic and acidic residues) spans 29–46 (IQEKEAKENEKQKSEKAY). Residues 47 to 73 (RKSRKKHKKEREKKKSKRRKREKHKHN) are compositionally biased toward basic residues. 3 consecutive C3H1-type zinc fingers follow at residues 273–299 (KGKQ…HDAE), 301–328 (EKRK…HNEF), and 329–352 (PCKF…HDDL). The stretch at 353-385 (TKETKKLLDKVLNTDEELINEDERELEELRKRG) forms a coiled coil. Disordered regions lie at residues 451 to 530 (FYTS…GPQN), 630 to 659 (PPVV…PVPG), 676 to 755 (YQED…GNQV), 947 to 1026 (LEQF…PYAP), and 1051 to 1189 (PRDH…SPFC). Residues 461–478 (QFQGSSPHPQHIYSSGSS) are compositionally biased toward low complexity. Residues 505 to 525 (AGPPGLPVPQSPPLPPGPPEI) are compositionally biased toward pro residues. The span at 639–659 (HGSGSDGSSTRTGHGPLPVPG) shows a compositional bias: low complexity. The segment covering 718 to 741 (KTLQKQTETLRNQQQPSTELSTPT) has biased composition (polar residues). The span at 961 to 973 (GDPRLQKNFDPRL) shows a compositional bias: basic and acidic residues. Composition is skewed to low complexity over residues 1009–1020 (SGAGTSNSGSGA) and 1056–1069 (SSST…SSGE). Position 1158 is a phosphoserine (serine 1158). Residues 1164-1179 (DPGRETDDKSLKEVFK) are compositionally biased toward basic and acidic residues.

The sequence is that of Zinc finger CCCH domain-containing protein 6 (ZC3H6) from Homo sapiens (Human).